Here is a 164-residue protein sequence, read N- to C-terminus: Cyclin-dependent kinase inhibitor 1 (164 aa).

N-acetylserine is present on Ser2. Residue Ser2 forms a Glycyl serine ester (Ser-Gly) (interchain with G-Cter in ubiquitin) linkage. The segment at 13-41 (HGSKACRRLFGPVDSEQLRRDCDALMAGC) adopts a C4-type zinc-finger fold. A required for binding cyclins region spans residues 17-24 (ACRRLFGP). Residues 53 to 58 (FVTETP) are required for binding CDKs. The segment at 80–164 (AGPRGGRDDL…RRLIFSKRKP (85 aa)) is disordered. A Phosphoserine; by GSK3-beta modification is found at Ser114. Ser130 carries the phosphoserine modification. The short motif at 140-164 (RKRRQTSMTDFYHSKRRLIFSKRKP) is the PIP-box K+4 motif element. Residues 141–156 (KRRQTSMTDFYHSKRR) carry the Nuclear localization signal motif. Position 145 is a phosphothreonine; by PKA, PKB/AKT1, PIM1 and PIM2 (Thr145). Ser146 is modified (phosphoserine; by PKC and NUAK1). An interaction with TRIM39 region spans residues 152-164 (HSKRRLIFSKRKP). Residues 153-164 (SKRRLIFSKRKP) are compositionally biased toward basic residues. A Phosphoserine modification is found at Ser160.

It belongs to the CDI family. In terms of assembly, interacts with HDAC1; the interaction is prevented by competitive binding of C10orf90/FATS to HDAC1 facilitating acetylation and protein stabilization of CDKN1A/p21. Interacts with MKRN1. Interacts with PSMA3. Interacts with PCNA. Component of the ternary complex, cyclin D-CDK4-CDKN1A. Interacts (via its N-terminal domain) with CDK4; the interaction promotes the assembly of the cyclin D-CDK4 complex, its nuclear translocation and promotes the cyclin D-dependent enzyme activity of CDK4. Binding to CDK2 leads to CDK2/cyclin E inactivation at the G1-S phase DNA damage checkpoint, thereby arresting cells at the G1-S transition during DNA repair. Interacts with PIM1. Interacts with STK11 and NUAK1. Interacts with DTL and TRIM39. Interacts with PKP3; the interaction sequesters CDKN1A to the cytoplasm thereby repressing its role as an inhibitor of CDK4- and CDK6-driven RB1 phosphorylation. Post-translationally, phosphorylation of Thr-145 by Akt or of Ser-146 by PKC impairs binding to PCNA. Phosphorylation at Ser-114 by GSK3-beta enhances ubiquitination by the DCX(DTL) complex. Phosphorylation of Thr-145 by PIM2 enhances protein stability and inhibits cell proliferation. Phosphorylation of Thr-145 by PIM1 results in the relocation of CDKN1A to the cytoplasm and enhanced CDKN1A protein stability. UV radiation-induced phosphorylation at Ser-146 by NUAK1 leads to its degradation. Ubiquitinated by MKRN1; leading to polyubiquitination and 26S proteasome-dependent degradation. Ubiquitinated by the DCX(DTL) complex, also named CRL4(CDT2) complex, leading to its degradation during S phase or following UV irradiation. Ubiquitination by the DCX(DTL) complex is essential to control replication licensing and is PCNA-dependent: interacts with PCNA via its PIP-box, while the presence of the containing the 'K+4' motif in the PIP box, recruit the DCX(DTL) complex, leading to its degradation. Ubiquitination at Ser-2 leads to degradation by the proteasome pathway. Ubiquitinated by RNF114; leading to proteasomal degradation. In terms of processing, acetylation leads to protein stability. Acetylated in vitro on Lys-141, Lys-154, Lys-161 and Lys-163. Deacetylation by HDAC1 is prevented by competitive binding of C10orf90/FATS to HDAC1.

It localises to the cytoplasm. It is found in the nucleus. Functionally, may be involved in p53/TP53 mediated inhibition of cellular proliferation in response to DNA damage. Binds to and inhibits cyclin-dependent kinase activity, preventing phosphorylation of critical cyclin-dependent kinase substrates and blocking cell cycle progression. Functions in the nuclear localization and assembly of cyclin D-CDK4 complex and promotes its kinase activity towards RB1. At higher stoichiometric ratios, inhibits the kinase activity of the cyclin D-CDK4 complex. Inhibits DNA synthesis by DNA polymerase delta by competing with POLD3 for PCNA binding. Plays an important role in controlling cell cycle progression and DNA damage-induced G2 arrest. Negatively regulates the CDK4- and CDK6-driven phosphorylation of RB1 in keratinocytes, thereby resulting in the release of E2F1 and subsequent transcription of E2F1-driven G1/S phase promoting genes. The sequence is that of Cyclin-dependent kinase inhibitor 1 (CDKN1A) from Felis catus (Cat).